The following is a 640-amino-acid chain: MQTAENVEHLNFQAEAKQLLRLMIHSLYSNKEIFLRELISNASDAADKLRFEGLSDTALYESDPDLKIRIAYDKEARTITISDNGIGMSRQEVIDNIGTIAKSGTREFIDSLTGDQARDANLIGQFGVGFYSAFIVADKVTLTTRRAGLTTEHGVRWESSGEGEYTLETVEKRDRGTEVVLHLREDEDELLSSFQLRSIIRKYSDHITLPIIMKKEVWDDESKAYKISDEEETVNQASAIWARPKNEITQEQYDEFYKHVAHDFEPPLAHVHARVEGKQEYIQLLYIPAHAPFDLFDREHRHGLKLYIKRVFIMDDAEKLLPGYLRFVRGIIDSNDLPLNVSREILQESKDIDSIRAGSVKKVLGLIEDLATSDKSEDQEKFKIFWREFGQVLKEGVAEDYSNRERIAKLLRFTSTHDEQEEQTVSLDDYIARMKPEQEKIYYITADGLKAAQSSPHLEIFRKKGIEVLLLHDRIDEWLTANLNEYAGKSLQSIAKGDLDLGKLEDEVEKQEHEKEAGDFQELTAKMKEVLGELVKDVRITYRLTESPACLVADTHDMSGNLGRLLKSAGQKVPDSKPFLEINPHHPMVQRLKYEEAKFADWSHILFDQALLAEGGQLEDPASFVRRLNDLLLQNILSGK.

An a; substrate-binding region spans residues 1 to 343 (MQTAENVEHL…SNDLPLNVSR (343 aa)). Positions 344–564 (EILQESKDID…THDMSGNLGR (221 aa)) are b. The tract at residues 565 to 640 (LLKSAGQKVP…LLLQNILSGK (76 aa)) is c.

The protein belongs to the heat shock protein 90 family. In terms of assembly, homodimer.

The protein resides in the cytoplasm. Molecular chaperone. Has ATPase activity. In Nitrosomonas eutropha (strain DSM 101675 / C91 / Nm57), this protein is Chaperone protein HtpG.